We begin with the raw amino-acid sequence, 485 residues long: Glutamyl-tRNA(Gln) amidotransferase subunit A (485 aa).

Catalysis depends on charge relay system residues K80 and S155. S179 acts as the Acyl-ester intermediate in catalysis.

Belongs to the amidase family. GatA subfamily. Heterotrimer of A, B and C subunits.

The enzyme catalyses L-glutamyl-tRNA(Gln) + L-glutamine + ATP + H2O = L-glutaminyl-tRNA(Gln) + L-glutamate + ADP + phosphate + H(+). Its function is as follows. Allows the formation of correctly charged Gln-tRNA(Gln) through the transamidation of misacylated Glu-tRNA(Gln) in organisms which lack glutaminyl-tRNA synthetase. The reaction takes place in the presence of glutamine and ATP through an activated gamma-phospho-Glu-tRNA(Gln). The sequence is that of Glutamyl-tRNA(Gln) amidotransferase subunit A from Leptospira borgpetersenii serovar Hardjo-bovis (strain L550).